Here is a 382-residue protein sequence, read N- to C-terminus: Proton extrusion protein PxcA (382 aa).

A run of 4 helical transmembrane segments spans residues 156 to 176, 257 to 277, 305 to 325, and 340 to 360; these read TLIS…VQQV, AVKN…VCLF, IILF…TVLL, and FILL…KYWI.

It belongs to the CemA family.

It localises to the cell inner membrane. Functionally, required for H(+) efflux immediately after light irradiation to form a rapid H(+) concentration gradient across the thylakoid membranes. Together with PxcL, contributes to transient H(+) uptake following dark to light transition. This is Proton extrusion protein PxcA from Synechococcus sp. (strain CC9311).